A 498-amino-acid polypeptide reads, in one-letter code: MSEQNQAADAQQDENKLIAERRAKLAELRAVGNPFPNDFRPTHHADALQQAHGSKEKAALEEAAMVVSVAGRVIRNRGAFMVLQDGSGQIQLYVTKEARGFAKSLDLGDIIGVSGVLHKSGKGDLYVNLDEYKLLTKALRPLPDKYHGLADQELRYRQRYVDLIANPEVRKTFLLRSRIVQFIRDYLNGREFLEVETPMLQAIPGGATARPFETHHNALDIDMYLRIAPELYLKRLVVGGFERVYEINRNFRNEGLSTRHNPEFTMLEFYQAYADYNDLMDLTEDMLRNLAQTVLGSTEVTATLGEDESVTYDFAKPFVRLSVFDSILHFNPDLKAEDIDSPESARAVAKNLGIPMKDNWGLGKVQIEIFEKTVEHRLIQPTFITEYPTEVSPLARRNDDNPFVTDRFEFFVGGREIANGFSELNDAEDQADRFKQQVAEKNAGDDEAMHYDADYVRALEYGLPPTAGEGIGIDRLVMLLTDSASIRDVLLFPHMRPE.

Residues glutamate 409 and glutamate 416 each contribute to the Mg(2+) site.

This sequence belongs to the class-II aminoacyl-tRNA synthetase family. Homodimer. Mg(2+) is required as a cofactor.

It localises to the cytoplasm. The enzyme catalyses tRNA(Lys) + L-lysine + ATP = L-lysyl-tRNA(Lys) + AMP + diphosphate. The polypeptide is Lysine--tRNA ligase (Teredinibacter turnerae (strain ATCC 39867 / T7901)).